A 1632-amino-acid polypeptide reads, in one-letter code: uncharacterized protein (1632 aa).

Residues 1-15 show a composition bias toward polar residues; sequence MSNNKQTAAPAATSN. Residues 1-23 are disordered; that stretch reads MSNNKQTAAPAATSNEKAENGAE. The Cytoplasmic segment spans residues 1–63; the sequence is MSNNKQTAAP…TKDAFKGKYR (63 aa). The helical transmembrane segment at 64–86 threads the bilayer; that stretch reads VFYGNGLHTSIMFGAGTAALDLM. Over 87–1632 the chain is Extracellular; the sequence is TPGSFLPPFP…ESDGEEMSGE (1546 aa). N149 and N274 each carry an N-linked (GlcNAc...) asparagine; by host glycan. Positions 516–538 are disordered; that stretch reads ELSSQLGDTDTKKEQKEKRSKQG. N654, N719, and N797 each carry an N-linked (GlcNAc...) asparagine; by host glycan. The disordered stretch occupies residues 838 to 890; that stretch reads IKGTKKSDDGDSKTDGSGDMEDDFTSLAKMTNRKRKAGGKDGPSKKKKKDGAD. 2 stretches are compositionally biased toward basic and acidic residues: residues 842–853 and 875–890; these read KKSDDGDSKTDG and GGKDGPSKKKKKDGAD. N-linked (GlcNAc...) asparagine; by host glycans are attached at residues N1012, N1031, N1261, N1339, N1511, and N1546. A disordered region spans residues 1603–1632; it reads PSAMDVDEDEDEDMDDESDDESDGEEMSGE. Acidic residues predominate over residues 1607–1632; it reads DVDEDEDEDMDDESDDESDGEEMSGE.

The protein resides in the host membrane. This is an uncharacterized protein from Ostreid herpesvirus 1 (isolate France) (OsHV-1).